The following is a 555-amino-acid chain: Spermine oxidase (555 aa).

FAD-binding positions include A35, E55, R63, 79-80 (TW), and V261. The tract at residues 271-306 (ARPRGPEIEPRGEGDHNHDTGEGGQGGEEPRGGRWD) is disordered. Positions 274-291 (RGPEIEPRGEGDHNHDTG) are enriched in basic and acidic residues. Residues E519 and 528-529 (TT) each bind FAD.

This sequence belongs to the flavin monoamine oxidase family. Requires FAD as cofactor. As to expression, widely expressed. Expressed in human tumor cell lines. Isoform 4 is only found in an embryonal kidney cell line.

It is found in the cytoplasm. Its subcellular location is the nucleus. The catalysed reaction is spermine + O2 + H2O = 3-aminopropanal + spermidine + H2O2. It functions in the pathway amine and polyamine degradation; spermine degradation. Its activity is regulated as follows. Inhibited at more than 90% by SL-11144, SL-11150 and SL-11158, at concentrations less than 1 uM. In terms of biological role, flavoenzyme which catalyzes the oxidation of spermine to spermidine. Can also use N(1)-acetylspermine and spermidine as substrates, with different affinity depending on the isoform (isozyme) and on the experimental conditions. Plays an important role in the regulation of polyamine intracellular concentration and has the potential to act as a determinant of cellular sensitivity to the antitumor polyamine analogs. May contribute to beta-alanine production via aldehyde dehydrogenase conversion of 3-amino-propanal. The protein is Spermine oxidase (SMOX) of Homo sapiens (Human).